The following is a 181-amino-acid chain: ATP synthase subunit b (181 aa).

Residues 12–32 (LPAVYDIVWSAVVFVVLLVVI) form a helical membrane-spanning segment.

This sequence belongs to the ATPase B chain family. F-type ATPases have 2 components, F(1) - the catalytic core - and F(0) - the membrane proton channel. F(1) has five subunits: alpha(3), beta(3), gamma(1), delta(1), epsilon(1). F(0) has three main subunits: a(1), b(2) and c(10-14). The alpha and beta chains form an alternating ring which encloses part of the gamma chain. F(1) is attached to F(0) by a central stalk formed by the gamma and epsilon chains, while a peripheral stalk is formed by the delta and b chains.

It localises to the cell membrane. Functionally, f(1)F(0) ATP synthase produces ATP from ADP in the presence of a proton or sodium gradient. F-type ATPases consist of two structural domains, F(1) containing the extramembraneous catalytic core and F(0) containing the membrane proton channel, linked together by a central stalk and a peripheral stalk. During catalysis, ATP synthesis in the catalytic domain of F(1) is coupled via a rotary mechanism of the central stalk subunits to proton translocation. In terms of biological role, component of the F(0) channel, it forms part of the peripheral stalk, linking F(1) to F(0). The sequence is that of ATP synthase subunit b from Clavibacter sepedonicus (Clavibacter michiganensis subsp. sepedonicus).